The chain runs to 230 residues: Thymidylate synthase 1 (230 aa).

DUMP is bound at residue 92-93 (RR). The active-site Nucleophile is C112. DUMP is bound by residues 132 to 135 (RSND), N143, and 173 to 175 (HVY). D135 contributes to the (6R)-5,10-methylene-5,6,7,8-tetrahydrofolate binding site.

Belongs to the thymidylate synthase family. Bacterial-type ThyA subfamily. Homodimer.

The protein resides in the cytoplasm. It carries out the reaction dUMP + (6R)-5,10-methylene-5,6,7,8-tetrahydrofolate = 7,8-dihydrofolate + dTMP. Its pathway is pyrimidine metabolism; dTTP biosynthesis. In terms of biological role, catalyzes the reductive methylation of 2'-deoxyuridine-5'-monophosphate (dUMP) to 2'-deoxythymidine-5'-monophosphate (dTMP) while utilizing 5,10-methylenetetrahydrofolate (mTHF) as the methyl donor and reductant in the reaction, yielding dihydrofolate (DHF) as a by-product. This enzymatic reaction provides an intracellular de novo source of dTMP, an essential precursor for DNA biosynthesis. This is Thymidylate synthase 1 from Bacillus amyloliquefaciens (Bacillus velezensis).